Here is a 386-residue protein sequence, read N- to C-terminus: Phosphoglycerate kinase (386 aa).

Substrate-binding positions include 21-23 (DLN), Arg36, 59-62 (HLGR), Arg113, and Arg146. ATP-binding positions include Lys197, Glu314, and 340 to 343 (GGDT).

Belongs to the phosphoglycerate kinase family. In terms of assembly, monomer.

The protein resides in the cytoplasm. The enzyme catalyses (2R)-3-phosphoglycerate + ATP = (2R)-3-phospho-glyceroyl phosphate + ADP. The protein operates within carbohydrate degradation; glycolysis; pyruvate from D-glyceraldehyde 3-phosphate: step 2/5. The protein is Phosphoglycerate kinase of Marinobacter nauticus (strain ATCC 700491 / DSM 11845 / VT8) (Marinobacter aquaeolei).